A 132-amino-acid chain; its full sequence is Small ribosomal subunit protein uS9 (132 aa).

The segment at 103 to 132 (NGLLTRDDRTKERKKPGLKRARKAPQYTKR) is disordered. Over residues 114-132 (ERKKPGLKRARKAPQYTKR) the composition is skewed to basic residues.

The protein belongs to the universal ribosomal protein uS9 family.

This Dehalococcoides mccartyi (strain CBDB1) protein is Small ribosomal subunit protein uS9.